We begin with the raw amino-acid sequence, 156 residues long: Nuclear cap-binding protein subunit 2 (156 aa).

Ser2 carries the N-acetylserine modification. Ser13 and Ser18 each carry phosphoserine. MRNA-binding positions include Tyr20, Tyr43, 112–116 (RTDWD), 123–127 (RQYGR), and 133–134 (QV). The RRM domain maps to 40 to 118 (CTLYVGNLSF…RIIRTDWDAG (79 aa)). Residues 124 to 156 (QYGRGRSGGQVRDEYRQDYDAGRGGYGKLAQNQ) are disordered. Residues 134–144 (VRDEYRQDYDA) are compositionally biased toward basic and acidic residues. The residue at position 146 (Arg146) is an Omega-N-methylarginine.

It belongs to the RRM NCBP2 family. As to quaternary structure, component of the nuclear cap-binding complex (CBC), a heterodimer composed of NCBP1/CBP80 and NCBP2/CBP20 that interacts with m7GpppG-capped RNA. Found in a U snRNA export complex with PHAX/RNUXA, NCBP1/CBP80, NCBP2/CBP20, RAN, XPO1 and m7G-capped RNA. Interacts with PHAX/RNUXA, EIF4G1, HNRNPF, HNRNPH1 and ALYREF/THOC4/ALY. Interacts with SRRT/ARS2 and KPNA3.

The protein resides in the nucleus. It localises to the cytoplasm. In terms of biological role, component of the cap-binding complex (CBC), which binds co-transcriptionally to the 5' cap of pre-mRNAs and is involved in various processes such as pre-mRNA splicing, translation regulation, nonsense-mediated mRNA decay, RNA-mediated gene silencing (RNAi) by microRNAs (miRNAs) and mRNA export. The CBC complex is involved in mRNA export from the nucleus via its interaction with ALYREF/THOC4/ALY, leading to the recruitment of the mRNA export machinery to the 5' end of mRNA and to mRNA export in a 5' to 3' direction through the nuclear pore. The CBC complex is also involved in mediating U snRNA and intronless mRNAs export from the nucleus. The CBC complex is essential for a pioneer round of mRNA translation, before steady state translation when the CBC complex is replaced by cytoplasmic cap-binding protein eIF4E. The pioneer round of mRNA translation mediated by the CBC complex plays a central role in nonsense-mediated mRNA decay (NMD), NMD only taking place in mRNAs bound to the CBC complex, but not on eIF4E-bound mRNAs. The CBC complex enhances NMD in mRNAs containing at least one exon-junction complex (EJC) via its interaction with UPF1, promoting the interaction between UPF1 and UPF2. The CBC complex is also involved in 'failsafe' NMD, which is independent of the EJC complex, while it does not participate in Staufen-mediated mRNA decay (SMD). During cell proliferation, the CBC complex is also involved in microRNAs (miRNAs) biogenesis via its interaction with SRRT/ARS2, thereby being required for miRNA-mediated RNA interference. The CBC complex also acts as a negative regulator of PARN, thereby acting as an inhibitor of mRNA deadenylation. In the CBC complex, NCBP2/CBP20 recognizes and binds capped RNAs (m7GpppG-capped RNA) but requires NCBP1/CBP80 to stabilize the movement of its N-terminal loop and lock the CBC into a high affinity cap-binding state with the cap structure. The conventional cap-binding complex with NCBP2 binds both small nuclear RNA (snRNA) and messenger (mRNA) and is involved in their export from the nucleus. This Bos taurus (Bovine) protein is Nuclear cap-binding protein subunit 2 (NCBP2).